We begin with the raw amino-acid sequence, 153 residues long: 6,7-dimethyl-8-ribityllumazine synthase (153 aa).

Residues Phe22, 56–58, and 80–82 contribute to the 5-amino-6-(D-ribitylamino)uracil site; these read AFE and AVI. 85 to 86 provides a ligand contact to (2S)-2-hydroxy-3-oxobutyl phosphate; the sequence is GT. His88 acts as the Proton donor in catalysis. Residue Phe113 participates in 5-amino-6-(D-ribitylamino)uracil binding. Arg127 contributes to the (2S)-2-hydroxy-3-oxobutyl phosphate binding site.

The protein belongs to the DMRL synthase family. Forms an icosahedral capsid composed of 60 subunits, arranged as a dodecamer of pentamers.

It catalyses the reaction (2S)-2-hydroxy-3-oxobutyl phosphate + 5-amino-6-(D-ribitylamino)uracil = 6,7-dimethyl-8-(1-D-ribityl)lumazine + phosphate + 2 H2O + H(+). The protein operates within cofactor biosynthesis; riboflavin biosynthesis; riboflavin from 2-hydroxy-3-oxobutyl phosphate and 5-amino-6-(D-ribitylamino)uracil: step 1/2. In terms of biological role, catalyzes the formation of 6,7-dimethyl-8-ribityllumazine by condensation of 5-amino-6-(D-ribitylamino)uracil with 3,4-dihydroxy-2-butanone 4-phosphate. This is the penultimate step in the biosynthesis of riboflavin. In Hydrogenovibrio crunogenus (strain DSM 25203 / XCL-2) (Thiomicrospira crunogena), this protein is 6,7-dimethyl-8-ribityllumazine synthase.